The chain runs to 144 residues: Augurin-B (144 aa).

Residues 1–18 (MSLHSLCVPTILLISVLS) form the signal peptide. Residues 19-68 (ICLSSGGSSDSKLHRILIKRDAKEIESRPKAYISVQQSKAKEFLSGLHRT) constitute a propeptide that is removed on maturation. Residues 109 to 144 (RSNDQGRQHHHDENAPMSQQDPRYNRHGANVNYDYY) form a disordered region. Positions 112–122 (DQGRQHHHDEN) are enriched in basic and acidic residues.

This sequence belongs to the augurin family.

It is found in the secreted. The protein localises to the cytoplasm. The protein resides in the apical cell membrane. Functionally, probable hormone. Required for the proper formation of the central nervous system by attenuating cell proliferation during development. The sequence is that of Augurin-B from Danio rerio (Zebrafish).